Here is a 129-residue protein sequence, read N- to C-terminus: Small ribosomal subunit protein uS11 (129 aa).

It belongs to the universal ribosomal protein uS11 family. Part of the 30S ribosomal subunit. Interacts with proteins S7 and S18. Binds to IF-3.

Located on the platform of the 30S subunit, it bridges several disparate RNA helices of the 16S rRNA. Forms part of the Shine-Dalgarno cleft in the 70S ribosome. The protein is Small ribosomal subunit protein uS11 of Desulforamulus reducens (strain ATCC BAA-1160 / DSM 100696 / MI-1) (Desulfotomaculum reducens).